A 229-amino-acid chain; its full sequence is Potassium/proton antiporter CemA (229 aa).

2 helical membrane passes run Phe7 to Val27 and Ile107 to Gly127.

This sequence belongs to the CemA family.

It localises to the plastid. It is found in the chloroplast inner membrane. The catalysed reaction is K(+)(in) + H(+)(out) = K(+)(out) + H(+)(in). Its function is as follows. Contributes to K(+)/H(+) antiport activity by supporting proton efflux to control proton extrusion and homeostasis in chloroplasts in a light-dependent manner to modulate photosynthesis. Prevents excessive induction of non-photochemical quenching (NPQ) under continuous-light conditions. Indirectly promotes efficient inorganic carbon uptake into chloroplasts. This chain is Potassium/proton antiporter CemA, found in Solanum tuberosum (Potato).